Here is a 433-residue protein sequence, read N- to C-terminus: Steroid hormone receptor ERR2 (433 aa).

The disordered stretch occupies residues 1 to 41 (MSSEDRHLGSSCGSFIKTEPSSPSSGIDALSHHSPSGSSDA). Positions 32-41 (HHSPSGSSDA) are enriched in low complexity. Residues 93–211 (YMLNAIPKRL…SPPAKKPLTK (119 aa)) are interaction with NANOG. The nuclear receptor DNA-binding region spans 100 to 186 (KRLCLVCGDI…RVRGGRQKYK (87 aa)). 2 consecutive NR C4-type zinc fingers follow at residues 103–123 (CLVC…CEAC) and 139–163 (CPAT…FMKC). An essential for ESRRB transcriptional activity and interaction with NCOA3 region spans residues 203-433 (PPAKKPLTKI…LFLEMLEAKV (231 aa)). The NR LBD domain maps to 208-432 (PLTKIVSYLL…KLFLEMLEAK (225 aa)).

This sequence belongs to the nuclear hormone receptor family. NR3 subfamily. As to quaternary structure, binds DNA as a monomer. Interacts with NR0B1; represses ESRRB activity at the GATA6 promoter. Interacts with NANOG; reciprocally modulates their transcriptional activities and activates POU5F1 expression. Interacts with NCOA3; mediates the interaction between ESRRB and RNA polymerase II complexes and allows NCOA3 corecruitment to ESRRB, KLF4, NANOG, and SOX2 enhancer regions to trigger ESRRB-dependent gene activation involved in self-renewal and pluripotency. Interacts with KDM1A; co-occupes the core set of ESRRB targets including ELF5 and EOMES. Interacts with the multiprotein complex Integrator, at least composed of INTS1, INTS2, INTS3, INTS4, INTS5, INTS6, INTS7, INTS8, INTS9/RC74, INTS10, INTS11/CPSF3L and INTS12; ESRRB is probably not a core component of the integrator complex and associates to integrator via its interaction with INTS1 and INTS9; attracts the transcriptional machinery. Interacts with JARID2. Interacts with POU5F1; recruits ESRRB near the POU5F1-SOX2 element in the NANOG proximal promoter leading to activation of NANOG expression; the interaction is DNA independent. In terms of processing, acetylated by PCAF/KAT2 (in vitro).

The protein resides in the nucleus. It localises to the cytoplasm. Its subcellular location is the chromosome. Functionally, transcription factor that binds a canonical ESRRB recognition (ERRE) sequence 5'TCAAGGTCA-3' localized on promoter and enhancer of targets genes regulating their expression or their transcription activity. Plays a role, in a LIF independent manner, in maintainance of self-renewal and pluripotency of embryonic and trophoblast stem cells through different signaling pathways including FGF signaling pathway and Wnt signaling pathways. Involved in morula development (2-16 cells embryos) by acting as a regulator at the 8-cell stage. Upon FGF signaling pathway activation, interacts with KDM1A by directly binding to enhancer site of ELF5 and EOMES and activating their transcription leading to self-renewal of trophoblast stem cells. Also regulates expression of multiple rod-specific genes and is required for survival of this cell type. Plays a role as transcription factor activator of GATA6, NR0B1, POU5F1 and PERM1. Plays a role as transcription factor repressor of NFE2L2 transcriptional activity and ESR1 transcriptional activity. During mitosis remains bound to a subset of interphase target genes, including pluripotency regulators, through the canonical ESRRB recognition (ERRE) sequence, leading to their transcriptional activation in early G1 phase. Can coassemble on structured DNA elements with other transcription factors like SOX2, POU5F1, KDM1A and NCOA3 to trigger ESRRB-dependent gene activation. This mechanism, in the case of SOX2 corecruitment prevents the embryonic stem cells (ESCs) to epiblast stem cells (EpiSC) transition through positive regulation of NR0B1 that inhibits the EpiSC transcriptional program. Also plays a role inner ear development by controlling expression of ion channels and transporters and in early placentation. This Rattus norvegicus (Rat) protein is Steroid hormone receptor ERR2.